A 217-amino-acid polypeptide reads, in one-letter code: Proteasome subunit beta type-6-A like protein (217 aa).

Residues Met-1–Gly-16 constitute a propeptide, removed in mature form. Catalysis depends on Thr-17, which acts as the Nucleophile.

Belongs to the peptidase T1B family. The 26S proteasome consists of a 20S proteasome core and two 19S regulatory subunits. The 20S proteasome core is composed of 28 subunits that are arranged in four stacked rings, resulting in a barrel-shaped structure. The two end rings are each formed by seven alpha subunits, and the two central rings are each formed by seven beta subunits. The catalytic chamber with the active sites is on the inside of the barrel.

The protein resides in the cytoplasm. It is found in the nucleus. The catalysed reaction is Cleavage of peptide bonds with very broad specificity.. The proteasome is a multicatalytic proteinase complex which is characterized by its ability to cleave peptides with Arg, Phe, Tyr, Leu, and Glu adjacent to the leaving group at neutral or slightly basic pH. The proteasome has an ATP-dependent proteolytic activity. This subunit is involved in antigen processing to generate class I binding peptides. The protein is Proteasome subunit beta type-6-A like protein (psmb6l-a) of Salmo salar (Atlantic salmon).